A 1040-amino-acid chain; its full sequence is Multidrug resistance protein MdtB (1040 aa).

12 helical membrane-spanning segments follow: residues 16–36, 347–367, 369–389, 396–416, 440–460, 472–492, 537–557, 863–883, 888–908, 911–931, 968–988, and 998–1018; these read FIMR…AGII, LMMA…NIPA, IIPG…MVFL, LTLM…IVVI, IGFT…PLLF, FAIT…TLTP, WLTL…WVFI, LGST…VLGI, FIHP…ALLA, IAGS…IGIV, ILMT…STGV, and IGMV…TPVI.

The protein belongs to the resistance-nodulation-cell division (RND) (TC 2.A.6) family. MdtB subfamily. Part of a tripartite efflux system composed of MdtA, MdtB and MdtC. MdtB forms a heteromultimer with MdtC.

The protein resides in the cell inner membrane. The MdtABC tripartite complex confers resistance against novobiocin and deoxycholate. This chain is Multidrug resistance protein MdtB, found in Escherichia fergusonii (strain ATCC 35469 / DSM 13698 / CCUG 18766 / IAM 14443 / JCM 21226 / LMG 7866 / NBRC 102419 / NCTC 12128 / CDC 0568-73).